A 184-amino-acid polypeptide reads, in one-letter code: Large ribosomal subunit protein uL6 (184 aa).

The protein belongs to the universal ribosomal protein uL6 family. Part of the 50S ribosomal subunit.

In terms of biological role, this protein binds to the 23S rRNA, and is important in its secondary structure. It is located near the subunit interface in the base of the L7/L12 stalk, and near the tRNA binding site of the peptidyltransferase center. This chain is Large ribosomal subunit protein uL6, found in Methanosphaera stadtmanae (strain ATCC 43021 / DSM 3091 / JCM 11832 / MCB-3).